Consider the following 79-residue polypeptide: Virulence protein MsgA (79 aa).

This sequence belongs to the DinI family.

Affects survival in macrophages. The sequence is that of Virulence protein MsgA (msgA) from Salmonella typhi.